The chain runs to 228 residues: Dehydrin Rab25 (228 aa).

2 disordered regions span residues 1 to 68 and 115 to 228; these read MAEH…EAPH and AGVT…HGHH. 2 stretches are compositionally biased toward basic and acidic residues: residues 169–187 and 212–228; these read KEKI…EQKQ and KGIV…HGHH.

This sequence belongs to the plant dehydrin family.

This chain is Dehydrin Rab25 (RAB25), found in Oryza sativa subsp. japonica (Rice).